The primary structure comprises 660 residues: Probable serine/threonine-protein kinase CE0033 (660 aa).

The Protein kinase domain maps to Tyr9–Leu278. Residues Ile15–Val23 and Lys38 each bind ATP. The active-site Proton acceptor is Asp136. The segment at Arg288–Ala319 is disordered. 3 consecutive PASTA domains span residues Ser377–Ser443, Gly444–Thr512, and Gly513–Asn577.

Belongs to the protein kinase superfamily. Ser/Thr protein kinase family.

It carries out the reaction L-seryl-[protein] + ATP = O-phospho-L-seryl-[protein] + ADP + H(+). The catalysed reaction is L-threonyl-[protein] + ATP = O-phospho-L-threonyl-[protein] + ADP + H(+). The polypeptide is Probable serine/threonine-protein kinase CE0033 (Corynebacterium efficiens (strain DSM 44549 / YS-314 / AJ 12310 / JCM 11189 / NBRC 100395)).